We begin with the raw amino-acid sequence, 287 residues long: Ciliary microtubule inner protein 6 (287 aa).

Composition is skewed to basic and acidic residues over residues 1–15 and 25–34; these read MEEK…KIED and EEIKHEEKPG. Residues 1–42 form a disordered region; it reads MEEKEDKHQQHKIEDAAITYVSENEEIKHEEKPGKSIHHSKS. Residues 128–160 are mn 1; sequence GIVPLASPGTSAELQNNFIEYISFIHQYDARKT. The interval 179-287 is disordered; it reads KPGSRPTVPK…PLNPPIKKSE (109 aa). 2 stretches are compositionally biased toward basic and acidic residues: residues 203-212 and 232-245; these read EQSKKTEKGN and LEPK…DVRQ. A mn 2 region spans residues 213-246; the sequence is SAESRMISPGLCQQNSQELLEPKTHLSETDVRQA.

The protein resides in the cell projection. It localises to the cilium. The sequence is that of Ciliary microtubule inner protein 6 from Homo sapiens (Human).